A 981-amino-acid polypeptide reads, in one-letter code: Helicase-like transcription factor CHR28 (981 aa).

Disordered stretches follow at residues 1-66 (MDSA…LDSR) and 112-194 (KRTH…RNSE). The span at 46 to 65 (SGSSSGANGHTKTGLTNLDS) shows a compositional bias: polar residues. Pro residues predominate over residues 119–128 (FSRPPFPPRP). Polar residues predominate over residues 166–176 (HGTSASPSHFN). The segment covering 181 to 194 (PMHRNGIGEERNSE) has biased composition (basic and acidic residues). Residues 241-526 (ETNSLHCMGG…YSYFRFLKYD (286 aa)) enclose the Helicase ATP-binding domain. ATP is bound at residue 254–261 (DDQGLGKT). 2 disordered regions span residues 293–337 (DADD…RKFN) and 439–462 (VVGTTKKSKKKKGNNNAGDSSDPD). The span at 439–451 (VVGTTKKSKKKKG) shows a compositional bias: basic residues. The RING-type; degenerate zinc-finger motif lies at 679–718 (CCVCHDPPEDPVVTLCGHIFCYQCVSDYITGDEDTCPAPR). Polar residues predominate over residues 779 to 798 (NQGTSNSTQNGQMASSSQQP). A disordered region spans residues 779-808 (NQGTSNSTQNGQMASSSQQPNDDDDDDDDD). The segment covering 799 to 808 (NDDDDDDDDD) has biased composition (acidic residues). The 173-residue stretch at 804–976 (DDDDDVTIVE…ATRLTVDDLK (173 aa)) folds into the Helicase C-terminal domain.

Belongs to the SNF2/RAD54 helicase family. RAD16 subfamily. In terms of assembly, interacts with SUVR2.

Its subcellular location is the nucleus. In terms of biological role, probable helicase-like transcription factor involved in transcriptional gene silencing. Associates with SUVR2 and contributes to transcriptional gene silencing at RNA-directed DNA methylation (RdDM) target loci but also at RdDM-independent target loci. May be involved in nucleosome positioning to form ordered nucleosome arrays on chromatin. Associates with SUVR2 and functions redundantly with FRG1. Required for the efficient methylation of a broad range of RdDM target loci. This chain is Helicase-like transcription factor CHR28, found in Arabidopsis thaliana (Mouse-ear cress).